Consider the following 365-residue polypeptide: DNA repair protein rhp51 (365 aa).

Positions 1–25 (MADTEVEMQVSAADTNNNENGQAQS) are disordered. Positions 12–25 (AADTNNNENGQAQS) are enriched in polar residues. 149–156 (GEFRTGKS) is a binding site for ATP.

The protein belongs to the RecA family. RAD51 subfamily. In terms of assembly, interacts with rad22, rad54, rdh54, rhp54, rti1, swi2 and swi5. Forms homooiligomers.

The protein resides in the nucleus. Required both for recombination and for the repair of DNA damage caused by X-rays. Binds to single and double-stranded DNA, in the presence of magnesium, and exhibits DNA-dependent ATPase activity. Promotes DNA strand annealing and strand exchange via DNA recombinase activity and forms helical nucleoprotein filaments. This chain is DNA repair protein rhp51 (rhp51), found in Schizosaccharomyces pombe (strain 972 / ATCC 24843) (Fission yeast).